A 305-amino-acid chain; its full sequence is UDP-3-O-acyl-N-acetylglucosamine deacetylase (305 aa).

The Zn(2+) site is built by His-79, His-238, and Asp-242. His-265 serves as the catalytic Proton donor.

Belongs to the LpxC family. Zn(2+) serves as cofactor.

It carries out the reaction a UDP-3-O-[(3R)-3-hydroxyacyl]-N-acetyl-alpha-D-glucosamine + H2O = a UDP-3-O-[(3R)-3-hydroxyacyl]-alpha-D-glucosamine + acetate. It participates in glycolipid biosynthesis; lipid IV(A) biosynthesis; lipid IV(A) from (3R)-3-hydroxytetradecanoyl-[acyl-carrier-protein] and UDP-N-acetyl-alpha-D-glucosamine: step 2/6. Catalyzes the hydrolysis of UDP-3-O-myristoyl-N-acetylglucosamine to form UDP-3-O-myristoylglucosamine and acetate, the committed step in lipid A biosynthesis. The protein is UDP-3-O-acyl-N-acetylglucosamine deacetylase of Klebsiella pneumoniae (strain 342).